The sequence spans 70 residues: Brevinin-1CG3 (70 aa).

The signal sequence occupies residues 1–22; that stretch reads MFTLKKSLLLLFFLGTINLSLC. Positions 23-44 are cleaved as a propeptide — removed in mature form; the sequence is EQERNAEEERRDDSDKRDVEVE. C64 and C70 are oxidised to a cystine.

It belongs to the frog skin active peptide (FSAP) family. Brevinin subfamily. Expressed by the skin glands.

It localises to the secreted. Antimicrobial peptide active against a variety of Gram-positive and some Gram-negative bacterial strains. Has antifungal activity against a slime mold isolate. Has hemolytic activity against human erythrocytes. In Amolops chunganensis (Chungan torrent frog), this protein is Brevinin-1CG3.